The sequence spans 368 residues: Alanine racemase (368 aa).

Catalysis depends on Lys-40, which acts as the Proton acceptor; specific for D-alanine. Lys-40 carries the N6-(pyridoxal phosphate)lysine modification. Arg-134 provides a ligand contact to substrate. Tyr-263 acts as the Proton acceptor; specific for L-alanine in catalysis. Met-310 provides a ligand contact to substrate.

The protein belongs to the alanine racemase family. It depends on pyridoxal 5'-phosphate as a cofactor.

It carries out the reaction L-alanine = D-alanine. The protein operates within amino-acid biosynthesis; D-alanine biosynthesis; D-alanine from L-alanine: step 1/1. Its function is as follows. Catalyzes the interconversion of L-alanine and D-alanine. May also act on other amino acids. This is Alanine racemase (alr) from Listeria monocytogenes serotype 4a (strain HCC23).